A 387-amino-acid chain; its full sequence is Exodeoxyribonuclease 7 large subunit (387 aa).

This sequence belongs to the XseA family. As to quaternary structure, heterooligomer composed of large and small subunits.

Its subcellular location is the cytoplasm. It carries out the reaction Exonucleolytic cleavage in either 5'- to 3'- or 3'- to 5'-direction to yield nucleoside 5'-phosphates.. Bidirectionally degrades single-stranded DNA into large acid-insoluble oligonucleotides, which are then degraded further into small acid-soluble oligonucleotides. This is Exodeoxyribonuclease 7 large subunit from Campylobacter hominis (strain ATCC BAA-381 / DSM 21671 / CCUG 45161 / LMG 19568 / NCTC 13146 / CH001A).